Consider the following 143-residue polypeptide: Large ribosomal subunit protein uL13 (143 aa).

This sequence belongs to the universal ribosomal protein uL13 family. Part of the 50S ribosomal subunit.

Its function is as follows. This protein is one of the early assembly proteins of the 50S ribosomal subunit, although it is not seen to bind rRNA by itself. It is important during the early stages of 50S assembly. This Dehalococcoides mccartyi (strain ATCC BAA-2100 / JCM 16839 / KCTC 5957 / BAV1) protein is Large ribosomal subunit protein uL13.